Consider the following 333-residue polypeptide: Holliday junction branch migration complex subunit RuvB (333 aa).

Positions 1–173 (MTAPENLDAA…FGIIEHLEYY (173 aa)) are large ATPase domain (RuvB-L). ATP-binding positions include Leu11, Arg12, Gly53, Lys56, Thr57, Thr58, 120-122 (EDF), Arg163, Tyr173, and Arg210. Thr57 provides a ligand contact to Mg(2+). The small ATPAse domain (RuvB-S) stretch occupies residues 174-244 (TAEEIATNLL…RAQSALDKLG (71 aa)). The segment at 247-333 (SAGLDDRDKK…IDDGNGIFLN (87 aa)) is head domain (RuvB-H). Residues Arg302 and Arg307 each coordinate DNA.

The protein belongs to the RuvB family. Homohexamer. Forms an RuvA(8)-RuvB(12)-Holliday junction (HJ) complex. HJ DNA is sandwiched between 2 RuvA tetramers; dsDNA enters through RuvA and exits via RuvB. An RuvB hexamer assembles on each DNA strand where it exits the tetramer. Each RuvB hexamer is contacted by two RuvA subunits (via domain III) on 2 adjacent RuvB subunits; this complex drives branch migration. In the full resolvosome a probable DNA-RuvA(4)-RuvB(12)-RuvC(2) complex forms which resolves the HJ.

The protein localises to the cytoplasm. The enzyme catalyses ATP + H2O = ADP + phosphate + H(+). In terms of biological role, the RuvA-RuvB-RuvC complex processes Holliday junction (HJ) DNA during genetic recombination and DNA repair, while the RuvA-RuvB complex plays an important role in the rescue of blocked DNA replication forks via replication fork reversal (RFR). RuvA specifically binds to HJ cruciform DNA, conferring on it an open structure. The RuvB hexamer acts as an ATP-dependent pump, pulling dsDNA into and through the RuvAB complex. RuvB forms 2 homohexamers on either side of HJ DNA bound by 1 or 2 RuvA tetramers; 4 subunits per hexamer contact DNA at a time. Coordinated motions by a converter formed by DNA-disengaged RuvB subunits stimulates ATP hydrolysis and nucleotide exchange. Immobilization of the converter enables RuvB to convert the ATP-contained energy into a lever motion, pulling 2 nucleotides of DNA out of the RuvA tetramer per ATP hydrolyzed, thus driving DNA branch migration. The RuvB motors rotate together with the DNA substrate, which together with the progressing nucleotide cycle form the mechanistic basis for DNA recombination by continuous HJ branch migration. Branch migration allows RuvC to scan DNA until it finds its consensus sequence, where it cleaves and resolves cruciform DNA. The polypeptide is Holliday junction branch migration complex subunit RuvB (Deinococcus radiodurans (strain ATCC 13939 / DSM 20539 / JCM 16871 / CCUG 27074 / LMG 4051 / NBRC 15346 / NCIMB 9279 / VKM B-1422 / R1)).